A 131-amino-acid polypeptide reads, in one-letter code: Class I hydrophobin 9 (131 aa).

Residues 1 to 23 (MFARRAISIFAFMLVALSIFAAA) form the signal peptide. Intrachain disulfides connect Cys52–Cys112, Cys59–Cys106, Cys60–Cys93, and Cys113–Cys126. Asn53 is a glycosylation site (N-linked (GlcNAc...) asparagine). An N-linked (GlcNAc...) asparagine glycan is attached at Asn115.

It belongs to the fungal hydrophobin family. In terms of assembly, self-assembles to form functional amyloid fibrils called rodlets. Self-assembly into fibrillar rodlets occurs spontaneously at hydrophobic:hydrophilic interfaces and the rodlets further associate laterally to form amphipathic monolayers.

The protein resides in the secreted. It localises to the cell wall. In terms of biological role, aerial growth, conidiation, and dispersal of filamentous fungi in the environment rely upon a capability of their secreting small amphipathic proteins called hydrophobins (HPBs) with low sequence identity. Class I can self-assemble into an outermost layer of rodlet bundles on aerial cell surfaces, conferring cellular hydrophobicity that supports fungal growth, development and dispersal; whereas Class II form highly ordered films at water-air interfaces through intermolecular interactions but contribute nothing to the rodlet structure. This is Class I hydrophobin 9 from Flammulina velutipes (Agaricus velutipes).